The following is a 230-amino-acid chain: 7-cyano-7-deazaguanine synthase (230 aa).

8–18 (FSGGQDSTTCL) provides a ligand contact to ATP. Zn(2+) is bound by residues cysteine 187, cysteine 196, cysteine 199, and cysteine 202.

This sequence belongs to the QueC family. Zn(2+) is required as a cofactor.

The enzyme catalyses 7-carboxy-7-deazaguanine + NH4(+) + ATP = 7-cyano-7-deazaguanine + ADP + phosphate + H2O + H(+). It participates in purine metabolism; 7-cyano-7-deazaguanine biosynthesis. Functionally, catalyzes the ATP-dependent conversion of 7-carboxy-7-deazaguanine (CDG) to 7-cyano-7-deazaguanine (preQ(0)). In Shewanella amazonensis (strain ATCC BAA-1098 / SB2B), this protein is 7-cyano-7-deazaguanine synthase.